The chain runs to 621 residues: uncharacterized protein (621 aa).

3 consecutive transmembrane segments (helical) span residues 240-260, 548-568, and 587-607; these read FFDA…NLLW, LGIV…VWTV, and VIIG…LTFM.

The protein resides in the cell membrane. This is an uncharacterized protein from Mycoplasma pneumoniae (strain ATCC 29342 / M129 / Subtype 1) (Mycoplasmoides pneumoniae).